A 157-amino-acid polypeptide reads, in one-letter code: Glycine/sarcosine/betaine reductase complex component A (157 aa).

Residue selenocysteine 44 is part of the active site. A non-standard amino acid (selenocysteine) is located at residue selenocysteine 44.

The protein belongs to the GrdA family. As to quaternary structure, monomer. Component of the glycine, sarcosine and betaine reductase complexes, together with components B and C.

The catalysed reaction is acetyl phosphate + [thioredoxin]-disulfide + NH4(+) + H2O = [thioredoxin]-dithiol + glycine + phosphate + H(+). The enzyme catalyses acetyl phosphate + methylamine + [thioredoxin]-disulfide + H2O = sarcosine + [thioredoxin]-dithiol + phosphate + H(+). It carries out the reaction acetyl phosphate + trimethylamine + [thioredoxin]-disulfide + H2O = glycine betaine + [thioredoxin]-dithiol + phosphate + H(+). In the first step of glycine, betaine and sarcosine reductases, the substrate is bound to component PB via a Schiff base intermediate. Then the PB-activated substrate is nucleophilically attacked by the selenol anion of component PA to transform it to a carboxymethylated selenoether and the respective amine. By action of component PC, acetyl phosphate is formed, leaving component PA in its oxidized state. Finally component PA becomes reduced by the thioredoxin system to start a new catalytic cycle of reductive deamination. This chain is Glycine/sarcosine/betaine reductase complex component A (grdA), found in Treponema denticola (strain ATCC 35405 / DSM 14222 / CIP 103919 / JCM 8153 / KCTC 15104).